The sequence spans 282 residues: Acyl-CoA-binding domain-containing protein 6 (282 aa).

The tract at residues 1 to 31 (MASSFLPAGAITGDSGGELSSGDDSGEVEFP) is disordered. One can recognise an ACB domain in the interval 42–127 (LAELFEKAAA…VKKLDPGWNP (86 aa)). An acyl-CoA is bound by residues 69 to 73 (YARYK) and K95. S106 is modified (phosphoserine). An an acyl-CoA-binding site is contributed by Y114. ANK repeat units lie at residues 191–220 (EGRALLHWACDRGHKELVTVLLQHRADINC) and 224–253 (EGQTALHYASACEFLDIVELLLQSGADPTL).

Monomer. In terms of tissue distribution, detected in placenta and spleen (at protein level). Detected in placenta, umbilical cord blood, CD34-positive hematopoietic progenitor cells and bone marrow.

It localises to the cytoplasm. The protein resides in the nucleus. Binds long-chain acyl-coenzyme A molecules with a strong preference for unsaturated C18:1-CoA, lower affinity for unsaturated C20:4-CoA, and very weak affinity for saturated C16:0-CoA. Does not bind fatty acids. Plays a role in protein N-myristoylation. This Homo sapiens (Human) protein is Acyl-CoA-binding domain-containing protein 6 (ACBD6).